A 571-amino-acid polypeptide reads, in one-letter code: Proline--tRNA ligase (571 aa).

This sequence belongs to the class-II aminoacyl-tRNA synthetase family. ProS type 1 subfamily. Homodimer.

It is found in the cytoplasm. It catalyses the reaction tRNA(Pro) + L-proline + ATP = L-prolyl-tRNA(Pro) + AMP + diphosphate. Functionally, catalyzes the attachment of proline to tRNA(Pro) in a two-step reaction: proline is first activated by ATP to form Pro-AMP and then transferred to the acceptor end of tRNA(Pro). As ProRS can inadvertently accommodate and process non-cognate amino acids such as alanine and cysteine, to avoid such errors it has two additional distinct editing activities against alanine. One activity is designated as 'pretransfer' editing and involves the tRNA(Pro)-independent hydrolysis of activated Ala-AMP. The other activity is designated 'posttransfer' editing and involves deacylation of mischarged Ala-tRNA(Pro). The misacylated Cys-tRNA(Pro) is not edited by ProRS. The sequence is that of Proline--tRNA ligase from Leuconostoc citreum (strain KM20).